The following is a 326-amino-acid chain: tRNA uridine(34) hydroxylase (326 aa).

Residues 123–217 (SDPDVLLVDT…YLEEVPEENS (95 aa)) form the Rhodanese domain. The Cysteine persulfide intermediate role is filled by cysteine 177. Over residues 276–320 (EEQKSRFREREKQVQLANERGETHVGGDAAKLIEQRKQEKKEKKQ) the composition is skewed to basic and acidic residues. Residues 276-326 (EEQKSRFREREKQVQLANERGETHVGGDAAKLIEQRKQEKKEKKQQQRSSK) are disordered.

The protein belongs to the TrhO family.

It catalyses the reaction uridine(34) in tRNA + AH2 + O2 = 5-hydroxyuridine(34) in tRNA + A + H2O. Its function is as follows. Catalyzes oxygen-dependent 5-hydroxyuridine (ho5U) modification at position 34 in tRNAs. This Aliivibrio salmonicida (strain LFI1238) (Vibrio salmonicida (strain LFI1238)) protein is tRNA uridine(34) hydroxylase.